A 296-amino-acid polypeptide reads, in one-letter code: MKDFEFFAPKTLEEAKGLLHQYKDVPPAIIAGGTDLVIEINDRWEKPDVVIDIKKLKELEYIRVEENTIHIGALSTFTQIENHPFIRSHVRALYKAASQVGSPQIRNLGTIGGNLSTSSVAGDGVSAMTTLDATVVLESVRGTRQMKLTDFFDGEGFKRRNALEADEIMTEVIIDRPDAHSASAFYKLAKRKSLAISVIGGGMAVKVDDAGVCTWASMRGGCIGRYPLHFKQAEEMLVGAPLTMETMEATLPILHDTVYDMARARPSVLYKKESVQGVFKKLFVDILDQLEGGCNE.

The FAD-binding PCMH-type domain occupies 1 to 179; the sequence is MKDFEFFAPK…TEVIIDRPDA (179 aa). FAD-binding positions include 29-36, Gly101, 110-114, Asp123, Arg160, Met169, and Lys187; these read IIAGGTDL and TIGGN.

In terms of assembly, heterooctamer of NDHM, NDHL, NDHS and NDHF. Dimer of heterotetramers. Requires FAD as cofactor.

It catalyses the reaction nicotinate + NADP(+) + H2O = 6-hydroxynicotinate + NADPH + H(+). Its pathway is cofactor degradation; nicotinate degradation; 6-hydroxynicotinate from nicotinate: step 1/1. Its activity is regulated as follows. Reversibly inactivated by selenide and sulfide. Not inhibited by cyanide. In terms of biological role, catalyzes the hydroxylation of nicotinate to 6-hydroxynicotinate. Also active against 2-pyrazinecarboxylic acid, but inactive against other nicotinate analogs. The protein is Nicotinate dehydrogenase FAD-subunit (ndhF) of Eubacterium barkeri (Clostridium barkeri).